The primary structure comprises 657 residues: Keratinocyte proline-rich protein (657 aa).

3 disordered regions span residues 285–320, 425–493, and 517–568; these read QGTY…SPPR, HPFP…PSPE, and QPVP…CGQP. Residues 292 to 302 show a composition bias toward low complexity; it reads TSQRRSQSTSR. The segment covering 434–444 has biased composition (basic and acidic residues); it reads QHLDRSPESSR. The residue at position 442 (serine 442) is a Phosphoserine. 3 stretches are compositionally biased toward pro residues: residues 449-493, 517-530, and 539-561; these read VPAP…PSPE, QPVP…VPRP, and GPRP…PCSS.

The protein localises to the cytoplasm. In Mus musculus (Mouse), this protein is Keratinocyte proline-rich protein.